The sequence spans 310 residues: Carbamate kinase-like protein YqeA (310 aa).

Belongs to the carbamate kinase family.

This chain is Carbamate kinase-like protein YqeA (yqeA), found in Escherichia coli (strain K12).